Reading from the N-terminus, the 152-residue chain is UPF0266 membrane protein YobD (152 aa).

The next 3 helical transmembrane spans lie at Leu-6 to Met-26, Ile-45 to His-65, and Ala-67 to Ile-87.

The protein belongs to the UPF0266 family.

The protein resides in the cell inner membrane. The protein is UPF0266 membrane protein YobD of Escherichia coli O157:H7 (strain EC4115 / EHEC).